Here is a 239-residue protein sequence, read N- to C-terminus: tRNA (guanine-N(1)-)-methyltransferase (239 aa).

S-adenosyl-L-methionine-binding positions include Gly-110 and 130–135 (VGDYVL).

This sequence belongs to the RNA methyltransferase TrmD family. In terms of assembly, homodimer.

The protein resides in the cytoplasm. The catalysed reaction is guanosine(37) in tRNA + S-adenosyl-L-methionine = N(1)-methylguanosine(37) in tRNA + S-adenosyl-L-homocysteine + H(+). Its function is as follows. Specifically methylates guanosine-37 in various tRNAs. The polypeptide is tRNA (guanine-N(1)-)-methyltransferase (Borrelia hermsii (strain HS1 / DAH)).